The chain runs to 525 residues: Serine/threonine protein phosphatase 2A 55 kDa regulatory subunit B beta isoform (525 aa).

Positions 1–30 (MDPSSKSPDDDDLRPEAEAARRPQPQPQPR) are disordered. WD repeat units follow at residues 48-87 (QEVD…DSAS) and 124-165 (EIEE…VKRI). The disordered stretch occupies residues 169–191 (NLNTSQSSGNGTTSSSSSSSSRA). Residues 171-189 (NTSQSSGNGTTSSSSSSSS) are compositionally biased toward low complexity. 4 WD repeats span residues 244–282 (AHDY…QSFN), 293–333 (DLTE…LCDN), 352–390 (EIIA…GPVA), and 495–525 (DLST…MYYA).

This sequence belongs to the phosphatase 2A regulatory subunit B family. In terms of assembly, PP2A consists of a common heteromeric enzyme, composed of a catalytic subunit (subunits C), a constant regulatory subunit (subunit A), and a variety of regulatory subunits such as subunits B (the R2/B/PR55/B55, R3/B''/PR72/PR130/PR59 and R5/B'/B56 families).

The B regulatory subunit may modulate substrate selectivity and catalytic activity, and may also direct the localization of the catalytic enzyme to a particular subcellular compartment. This is Serine/threonine protein phosphatase 2A 55 kDa regulatory subunit B beta isoform from Oryza sativa subsp. japonica (Rice).